Here is a 2623-residue protein sequence, read N- to C-terminus: Probable polyketide synthase 31 (2623 aa).

The segment covering 1-11 (MTQNIDNNNNK) has biased composition (low complexity). Residues 1–25 (MTQNIDNNNNKLIRDRNDDDDVDRN) form a disordered region. Positions 27 to 461 (DGDVAVIGIG…GSNVCLILSE (435 aa)) constitute a Ketosynthase family 3 (KS3) domain. Active-site for beta-ketoacyl synthase activity residues include Cys-199, His-338, and His-384. The interval 666-699 (GVSADIIIGHSLGEVSSPYCSGMIDFQTLCYLIY) is acyl/malonyl transferase. Ser-676 acts as the For acyl/malonyl transferase activity in catalysis. Positions 959–1088 (HEKIKSEGPS…GNFNLTKHNS (130 aa)) are N-terminal hotdog fold. A PKS/mFAS DH domain is found at 959 to 1267 (HEKIKSEGPS…CALVSLGSNP (309 aa)). His-1000 acts as the Proton acceptor; for dehydratase activity in catalysis. Residues 1105 to 1267 (NFTSISKQDF…CALVSLGSNP (163 aa)) form a C-terminal hotdog fold region. Asp-1177 functions as the Proton donor; for dehydratase activity in the catalytic mechanism. Residues 2524–2601 (ANNEIIHSTI…QSIEIIKSAK (78 aa)) enclose the Carrier domain. Position 2561 is an O-(pantetheine 4'-phosphoryl)serine (Ser-2561). Positions 2600–2623 (AKNNNKNNNNNNNKNNSNNKNKNN) are disordered. A compositionally biased stretch (low complexity) spans 2601 to 2623 (KNNNKNNNNNNNKNNSNNKNKNN).

Requires pantetheine 4'-phosphate as cofactor.

Functionally, probable polyketide synthase. The chain is Probable polyketide synthase 31 (pks31) from Dictyostelium discoideum (Social amoeba).